A 429-amino-acid chain; its full sequence is Malate dehydrogenase [NADP] 1, chloroplastic (429 aa).

The N-terminal 40 residues, 1-40 (MGLSTAYSPVGSHLAPAPLGHRRSAQLHRPRRALLATVRC), are a transit peptide targeting the chloroplast. A disulfide bridge links Cys-64 with Cys-69. 93–99 (GAAGMIS) contributes to the NADP(+) binding site. Positions 174 and 180 each coordinate substrate. Residues Asn-187, Gln-194, and 211-213 (VGN) each bind NADP(+). Substrate-binding residues include Asn-213 and Arg-244. Residue His-269 is the Proton acceptor of the active site. A disulfide bridge links Cys-405 with Cys-417.

Belongs to the LDH/MDH superfamily. MDH type 2 family. In terms of assembly, homodimer.

The protein resides in the plastid. The protein localises to the chloroplast. It catalyses the reaction (S)-malate + NADP(+) = oxaloacetate + NADPH + H(+). With respect to regulation, chloroplast NADP-MDH is activated upon illumination. In order to be enzymatically active, disulfide bridges on the protein must be reduced by thioredoxin which receives electrons from ferredoxin and the electron transport system of photosynthesis. In terms of biological role, the chloroplastic, NADP-dependent form is essential for the photosynthesis C4 cycle, which allows plants to circumvent the problem of photorespiration. In C4 plants, NADP-MDH activity acts to convert oxaloacetate to malate in chloroplasts of mesophyll cells for transport to the bundle sheath cells. This Sorghum bicolor (Sorghum) protein is Malate dehydrogenase [NADP] 1, chloroplastic.